We begin with the raw amino-acid sequence, 309 residues long: Polyprenal reductase (309 aa).

7 helical membrane-spanning segments follow: residues 12-32 (LPLY…FTLI), 72-92 (FYAI…SLIY), 114-134 (IPPI…LHVA), 151-171 (MNLF…ISIM), 184-204 (LHVS…LFWI), 242-262 (LVSC…FLVI), and 270-290 (FIIM…HSWY).

It belongs to the steroid 5-alpha reductase family. Polyprenal reductase subfamily.

It localises to the endoplasmic reticulum membrane. It catalyses the reaction a di-trans,poly-cis-dolichal + NADP(+) = a di-trans,poly-cis-polyprenal + NADPH + H(+). It participates in protein modification; protein glycosylation. In terms of biological role, plays a key role in early steps of protein N-linked glycosylation by being involved in the conversion of polyprenol into dolichol. Acts as a polyprenal reductase that mediates the reduction of polyprenal into dolichal in a NADP-dependent mechanism. Dolichols are required for the synthesis of dolichol-linked monosaccharides and the oligosaccharide precursor used for N-glycosylation. This chain is Polyprenal reductase, found in Caenorhabditis elegans.